The sequence spans 93 residues: UPF0473 protein CHY_0543 (93 aa).

Belongs to the UPF0473 family.

This is UPF0473 protein CHY_0543 from Carboxydothermus hydrogenoformans (strain ATCC BAA-161 / DSM 6008 / Z-2901).